Here is a 457-residue protein sequence, read N- to C-terminus: Exodeoxyribonuclease 7 large subunit (457 aa).

Belongs to the XseA family. In terms of assembly, heterooligomer composed of large and small subunits.

The protein resides in the cytoplasm. It carries out the reaction Exonucleolytic cleavage in either 5'- to 3'- or 3'- to 5'-direction to yield nucleoside 5'-phosphates.. Bidirectionally degrades single-stranded DNA into large acid-insoluble oligonucleotides, which are then degraded further into small acid-soluble oligonucleotides. The chain is Exodeoxyribonuclease 7 large subunit from Cronobacter sakazakii (strain ATCC BAA-894) (Enterobacter sakazakii).